The following is a 63-amino-acid chain: Cytochrome c oxidase subunit 7C, mitochondrial (63 aa).

Residues 1–16 (MLGHSIRRFTTSVVRR) constitute a mitochondrion transit peptide. Residues 17–33 (SHYEEGPGKNLPFSVEN) lie on the Mitochondrial matrix side of the membrane. K25 carries the post-translational modification N6-acetyllysine; alternate. Residue K25 is modified to N6-succinyllysine; alternate. The helical transmembrane segment at 34 to 60 (KWTLLVKMCLFFGSAFSVPFLIVRHQL) threads the bilayer. At 61–63 (LKQ) the chain is on the mitochondrial intermembrane side.

This sequence belongs to the cytochrome c oxidase VIIc family. As to quaternary structure, component of the cytochrome c oxidase (complex IV, CIV), a multisubunit enzyme composed of 14 subunits. The complex is composed of a catalytic core of 3 subunits MT-CO1, MT-CO2 and MT-CO3, encoded in the mitochondrial DNA, and 11 supernumerary subunits COX4I, COX5A, COX5B, COX6A, COX6B, COX6C, COX7A, COX7B, COX7C, COX8 and NDUFA4, which are encoded in the nuclear genome. The complex exists as a monomer or a dimer and forms supercomplexes (SCs) in the inner mitochondrial membrane with NADH-ubiquinone oxidoreductase (complex I, CI) and ubiquinol-cytochrome c oxidoreductase (cytochrome b-c1 complex, complex III, CIII), resulting in different assemblies (supercomplex SCI(1)III(2)IV(1) and megacomplex MCI(2)III(2)IV(2)). Interacts with RAB5IF.

The protein resides in the mitochondrion inner membrane. Its pathway is energy metabolism; oxidative phosphorylation. In terms of biological role, component of the cytochrome c oxidase, the last enzyme in the mitochondrial electron transport chain which drives oxidative phosphorylation. The respiratory chain contains 3 multisubunit complexes succinate dehydrogenase (complex II, CII), ubiquinol-cytochrome c oxidoreductase (cytochrome b-c1 complex, complex III, CIII) and cytochrome c oxidase (complex IV, CIV), that cooperate to transfer electrons derived from NADH and succinate to molecular oxygen, creating an electrochemical gradient over the inner membrane that drives transmembrane transport and the ATP synthase. Cytochrome c oxidase is the component of the respiratory chain that catalyzes the reduction of oxygen to water. Electrons originating from reduced cytochrome c in the intermembrane space (IMS) are transferred via the dinuclear copper A center (CU(A)) of subunit 2 and heme A of subunit 1 to the active site in subunit 1, a binuclear center (BNC) formed by heme A3 and copper B (CU(B)). The BNC reduces molecular oxygen to 2 water molecules using 4 electrons from cytochrome c in the IMS and 4 protons from the mitochondrial matrix. This is Cytochrome c oxidase subunit 7C, mitochondrial (COX7C) from Macaca fascicularis (Crab-eating macaque).